A 58-amino-acid polypeptide reads, in one-letter code: UPF0391 membrane protein Sfri_4000 (58 aa).

Transmembrane regions (helical) follow at residues Leu6–Ala26 and Ala27–Val47.

The protein belongs to the UPF0391 family.

The protein resides in the cell membrane. The protein is UPF0391 membrane protein Sfri_4000 of Shewanella frigidimarina (strain NCIMB 400).